The chain runs to 125 residues: U-scoloptoxin(05)-Sm1a (125 aa).

Positions 1–20 are cleaved as a signal peptide; sequence MNVLYTKIFFILILTRTSSA.

It belongs to the scoloptoxin-05 family. In terms of processing, contains 4 disulfide bonds. As to expression, expressed by the venom gland.

It localises to the secreted. This Scolopendra morsitans (Tanzanian blue ringleg centipede) protein is U-scoloptoxin(05)-Sm1a.